The sequence spans 255 residues: Ribosomal RNA small subunit methyltransferase A (255 aa).

Positions 12, 14, 39, 60, 81, and 103 each coordinate S-adenosyl-L-methionine.

This sequence belongs to the class I-like SAM-binding methyltransferase superfamily. rRNA adenine N(6)-methyltransferase family. RsmA subfamily.

It is found in the cytoplasm. The enzyme catalyses adenosine(1518)/adenosine(1519) in 16S rRNA + 4 S-adenosyl-L-methionine = N(6)-dimethyladenosine(1518)/N(6)-dimethyladenosine(1519) in 16S rRNA + 4 S-adenosyl-L-homocysteine + 4 H(+). In terms of biological role, specifically dimethylates two adjacent adenosines (A1518 and A1519) in the loop of a conserved hairpin near the 3'-end of 16S rRNA in the 30S particle. May play a critical role in biogenesis of 30S subunits. The sequence is that of Ribosomal RNA small subunit methyltransferase A from Variovorax paradoxus (strain S110).